A 348-amino-acid chain; its full sequence is Glucokinase (348 aa).

Residue 14-19 (GDVGGS) coordinates ATP. The tract at residues 327 to 348 (SDPAPVAAPTHPRGGTAGDMHA) is disordered.

The protein belongs to the bacterial glucokinase family.

The protein resides in the cytoplasm. It catalyses the reaction D-glucose + ATP = D-glucose 6-phosphate + ADP + H(+). The chain is Glucokinase from Chromobacterium violaceum (strain ATCC 12472 / DSM 30191 / JCM 1249 / CCUG 213 / NBRC 12614 / NCIMB 9131 / NCTC 9757 / MK).